The chain runs to 471 residues: Galactolipase DONGLE, chloroplastic (471 aa).

A chloroplast-targeting transit peptide spans 1–88; sequence MAAKVFTQNP…PLSRVWREIQ (88 aa). Positions 44 to 71 are disordered; that stretch reads SSSTMSPPISSSPLSLPSSSSSQAIPPS. Residues 284-288 carry the GXSXG motif; sequence GHSMG. Ser286 (acyl-ester intermediate) is an active-site residue. Residues Asp349 and His400 each act as charge relay system in the active site.

This sequence belongs to the AB hydrolase superfamily. Lipase family. As to expression, expressed in leaves and seedlings. Not detected in flowers, siliques or roots.

Its subcellular location is the plastid. The protein localises to the chloroplast. The enzyme catalyses a 1,2-diacyl-3-O-(beta-D-galactosyl)-sn-glycerol + 2 H2O = 3-beta-D-galactosyl-sn-glycerol + 2 a fatty acid + 2 H(+). The catalysed reaction is a 1,2-diacyl-sn-glycero-3-phosphocholine + H2O = a 2-acyl-sn-glycero-3-phosphocholine + a fatty acid + H(+). It catalyses the reaction a 1,2-diacyl-3-O-[alpha-D-galactosyl-(1-&gt;6)-beta-D-galactosyl]-sn-glycerol + H2O = acyl-3-O-[alpha-D-galactosyl-(1-&gt;6)-beta-D-galactosyl]-sn-glycerol + a fatty acid + H(+). In terms of biological role, sn-1-specific phospholipase that releases free fatty acids from phosphatidylcholine. Has a higher galactolipase activity than phospholipase A1 activity when digalactosyldiacylglycerol (DGDG) is used as substrate. Catalyzes the initial step of jasmonic acid biosynthesis. Required for the biosynthesis of basal-level endogenous jasmonate in vegetative tissues. Regulates leaves growth. Not essential for jasmonate biosynthesis after wounding or upon pathogen infection. The protein is Galactolipase DONGLE, chloroplastic of Arabidopsis thaliana (Mouse-ear cress).